The following is a 356-amino-acid chain: tRNA (guanine(26)-N(2))-dimethyltransferase (356 aa).

The region spanning 5–352 (VLRREGTVEF…VSAGEVERVL (348 aa)) is the Trm1 methyltransferase domain. 5 residues coordinate S-adenosyl-L-methionine: Arg-40, Arg-67, Asp-85, Asp-111, and Ala-112.

Belongs to the class I-like SAM-binding methyltransferase superfamily. Trm1 family.

The enzyme catalyses guanosine(26) in tRNA + 2 S-adenosyl-L-methionine = N(2)-dimethylguanosine(26) in tRNA + 2 S-adenosyl-L-homocysteine + 2 H(+). Its function is as follows. Dimethylates a single guanine residue at position 26 of a number of tRNAs using S-adenosyl-L-methionine as donor of the methyl groups. This Pyrobaculum arsenaticum (strain DSM 13514 / JCM 11321 / PZ6) protein is tRNA (guanine(26)-N(2))-dimethyltransferase.